The sequence spans 420 residues: Gamma-glutamyl phosphate reductase 2 (420 aa).

Belongs to the gamma-glutamyl phosphate reductase family.

It is found in the cytoplasm. It carries out the reaction L-glutamate 5-semialdehyde + phosphate + NADP(+) = L-glutamyl 5-phosphate + NADPH + H(+). It functions in the pathway amino-acid biosynthesis; L-proline biosynthesis; L-glutamate 5-semialdehyde from L-glutamate: step 2/2. In terms of biological role, catalyzes the NADPH-dependent reduction of L-glutamate 5-phosphate into L-glutamate 5-semialdehyde and phosphate. The product spontaneously undergoes cyclization to form 1-pyrroline-5-carboxylate. This is Gamma-glutamyl phosphate reductase 2 from Synechocystis sp. (strain ATCC 27184 / PCC 6803 / Kazusa).